We begin with the raw amino-acid sequence, 425 residues long: Serine--tRNA ligase (425 aa).

Position 231–233 (231–233 (TAE)) interacts with L-serine. 262-264 (RSE) is an ATP binding site. Glu-285 provides a ligand contact to L-serine. ATP is bound at residue 349–352 (EISS). Residue Ser-385 coordinates L-serine.

It belongs to the class-II aminoacyl-tRNA synthetase family. Type-1 seryl-tRNA synthetase subfamily. Homodimer. The tRNA molecule binds across the dimer.

The protein localises to the cytoplasm. The catalysed reaction is tRNA(Ser) + L-serine + ATP = L-seryl-tRNA(Ser) + AMP + diphosphate + H(+). It carries out the reaction tRNA(Sec) + L-serine + ATP = L-seryl-tRNA(Sec) + AMP + diphosphate + H(+). Its pathway is aminoacyl-tRNA biosynthesis; selenocysteinyl-tRNA(Sec) biosynthesis; L-seryl-tRNA(Sec) from L-serine and tRNA(Sec): step 1/1. In terms of biological role, catalyzes the attachment of serine to tRNA(Ser). Is also able to aminoacylate tRNA(Sec) with serine, to form the misacylated tRNA L-seryl-tRNA(Sec), which will be further converted into selenocysteinyl-tRNA(Sec). This Bacillus velezensis (strain DSM 23117 / BGSC 10A6 / LMG 26770 / FZB42) (Bacillus amyloliquefaciens subsp. plantarum) protein is Serine--tRNA ligase.